A 281-amino-acid chain; its full sequence is Ribosomal protein L11 methyltransferase (281 aa).

Residues Thr-133, Gly-154, Asp-175, and Asn-216 each coordinate S-adenosyl-L-methionine.

The protein belongs to the methyltransferase superfamily. PrmA family.

Its subcellular location is the cytoplasm. The enzyme catalyses L-lysyl-[protein] + 3 S-adenosyl-L-methionine = N(6),N(6),N(6)-trimethyl-L-lysyl-[protein] + 3 S-adenosyl-L-homocysteine + 3 H(+). Its function is as follows. Methylates ribosomal protein L11. This is Ribosomal protein L11 methyltransferase from Campylobacter jejuni (strain RM1221).